The chain runs to 71 residues: UPF0346 protein str0441 (71 aa).

Belongs to the UPF0346 family.

This is UPF0346 protein str0441 from Streptococcus thermophilus (strain CNRZ 1066).